The primary structure comprises 675 residues: Methionine--tRNA ligase (675 aa).

Positions 15–25 (PYANGSIHLGH) match the 'HIGH' region motif. Zn(2+) is bound by residues cysteine 146, cysteine 149, cysteine 159, and cysteine 162. The 'KMSKS' region motif lies at 332 to 336 (KMSKS). Lysine 335 serves as a coordination point for ATP. Residues 573–675 (DFAKVDMRIA…SGAQPGMQVK (103 aa)) form the tRNA-binding domain.

Belongs to the class-I aminoacyl-tRNA synthetase family. MetG type 1 subfamily. In terms of assembly, homodimer. The cofactor is Zn(2+).

Its subcellular location is the cytoplasm. The catalysed reaction is tRNA(Met) + L-methionine + ATP = L-methionyl-tRNA(Met) + AMP + diphosphate. Its function is as follows. Is required not only for elongation of protein synthesis but also for the initiation of all mRNA translation through initiator tRNA(fMet) aminoacylation. In Yersinia pestis bv. Antiqua (strain Angola), this protein is Methionine--tRNA ligase.